The sequence spans 276 residues: C-type lectin domain family 12 member B (276 aa).

The Cytoplasmic portion of the chain corresponds to 1 to 43 (MSEDMTYATLTFQDSVAAGNNQDRNNLRKRGYPAPSSIWRQAA). Residues 5–10 (MTYATL) carry the ITIM motif motif. Position 7 is a phosphotyrosine (Tyr-7). A helical; Signal-anchor for type II membrane protein transmembrane segment spans residues 44–64 (LGLLTLCVMLLIGLVTLGIMF). The Extracellular segment spans residues 65–276 (LQMSSEINSD…AALVKIEDLD (212 aa)). N-linked (GlcNAc...) asparagine glycosylation is found at Asn-91, Asn-176, and Asn-237. Residues 150–264 (YQTSCYYFAV…CSAEISWICE (115 aa)) enclose the C-type lectin domain. 2 cysteine pairs are disulfide-bonded: Cys-172–Cys-263 and Cys-242–Cys-255.

In terms of assembly, homodimer. Interacts (via ITIM motif) with PTPN6. Interacts (via ITIM motif) with PTPN11; this interaction triggers dephosphorylation and activation of PTPN11.

Its subcellular location is the cell membrane. Functionally, inhibitory receptor postulated to negatively regulate immune and non-immune functions. Upon phosphorylation, recruits SH2 domain-containing PTPN6 and PTPN11 phosphatases to its ITIM motif and antagonizes activation signals. Although it inhibits KLRK1/NKG2D-mediated signaling, it does not bind known ligands of KLRK1/NKG2D and therefore is not its inhibitory counterpart. May limit activation of myeloid cell subsets in response to infection or tissue inflammation. May protect target cells against natural killer cell-mediated lysis. May negatively regulate cell cycle and differentiation of melanocytes via inactivation of STAT3. The sequence is that of C-type lectin domain family 12 member B (CLEC12B) from Bos taurus (Bovine).